The sequence spans 349 residues: Probable L-asparaginase periplasmic (349 aa).

The first 21 residues, 1 to 21 (MKLTKLALCTLFGLGVSIANA), serve as a signal peptide directing secretion. The region spanning 25-349 (PNITILATGG…KVIQQYFEDF (325 aa)) is the Asparaginase/glutaminase domain. The active-site O-isoaspartyl threonine intermediate is Thr35. Substrate-binding positions include Ser81 and 112-113 (TD). An intrachain disulfide couples Cys100 to Cys128.

The protein belongs to the asparaginase 1 family.

It localises to the periplasm. The enzyme catalyses L-asparagine + H2O = L-aspartate + NH4(+). The chain is Probable L-asparaginase periplasmic (ansB) from Haemophilus influenzae (strain ATCC 51907 / DSM 11121 / KW20 / Rd).